A 447-amino-acid polypeptide reads, in one-letter code: Aladin (447 aa).

The tract at residues 49–69 (STPSSLQENEGQENGDKASGE) is disordered. WD repeat units lie at residues 97–138 (LSEI…EPCI), 142–181 (DSQR…NMAL), 210–250 (QNDE…GTPI), and 252–291 (RGLG…SEPW).

As to quaternary structure, part of the nuclear pore complex (NPC). The NPC has an eight-fold symmetrical structure comprising a central transport channel and two rings, the cytoplasmic and nuclear rings, to which eight filaments are attached. The cytoplasmic filaments have loose ends, while the nuclear filaments are joined in a distal ring, forming a nuclear basket. NPCs are highly dynamic in configuration and composition, and can be devided in 3 subcomplexes, the NUP62 subcomplex, the NUP107-160 subcomplex and the NUP93 subcomplex, containing approximately 30 different nucleoporin proteins.

Its subcellular location is the nucleus envelope. It is found in the nucleus. It localises to the nuclear pore complex. This is Aladin from Arabidopsis thaliana (Mouse-ear cress).